The following is a 186-amino-acid chain: Crossover junction endodeoxyribonuclease RuvC (186 aa).

Catalysis depends on residues aspartate 14, glutamate 73, and aspartate 145. Residues aspartate 14, glutamate 73, and aspartate 145 each contribute to the Mg(2+) site. The interval 162–186 (GRSLPPSRGRRRSGSRQRWRDYRPS) is disordered. A compositionally biased stretch (basic residues) spans 169–178 (RGRRRSGSRQ).

It belongs to the RuvC family. In terms of assembly, homodimer which binds Holliday junction (HJ) DNA. The HJ becomes 2-fold symmetrical on binding to RuvC with unstacked arms; it has a different conformation from HJ DNA in complex with RuvA. In the full resolvosome a probable DNA-RuvA(4)-RuvB(12)-RuvC(2) complex forms which resolves the HJ. Requires Mg(2+) as cofactor.

Its subcellular location is the cytoplasm. The enzyme catalyses Endonucleolytic cleavage at a junction such as a reciprocal single-stranded crossover between two homologous DNA duplexes (Holliday junction).. In terms of biological role, the RuvA-RuvB-RuvC complex processes Holliday junction (HJ) DNA during genetic recombination and DNA repair. Endonuclease that resolves HJ intermediates. Cleaves cruciform DNA by making single-stranded nicks across the HJ at symmetrical positions within the homologous arms, yielding a 5'-phosphate and a 3'-hydroxyl group; requires a central core of homology in the junction. The consensus cleavage sequence is 5'-(A/T)TT(C/G)-3'. Cleavage occurs on the 3'-side of the TT dinucleotide at the point of strand exchange. HJ branch migration catalyzed by RuvA-RuvB allows RuvC to scan DNA until it finds its consensus sequence, where it cleaves and resolves the cruciform DNA. In Chromohalobacter salexigens (strain ATCC BAA-138 / DSM 3043 / CIP 106854 / NCIMB 13768 / 1H11), this protein is Crossover junction endodeoxyribonuclease RuvC.